A 688-amino-acid chain; its full sequence is PTS system glucoside-specific EIICBA component (688 aa).

The PTS EIIC type-1 domain occupies 3-427 (KKLFGQLQRI…FKLKTPGRED (425 aa)). The next 10 membrane-spanning stretches (helical) occupy residues 12–32 (IGKA…LLAF), 81–101 (LGLA…YLIM), 137–157 (LVLG…MGAL), 182–202 (FVPI…SFAW), 223–243 (LTTF…LHHI), 284–304 (AFTT…AFAI), 315–335 (VVGG…ITEP), 340–360 (FLFV…TSFL), 364–384 (LLGV…ILYG), and 395–415 (LVIP…DFAI). Residues 438–519 (AKLPFDVLDA…AKIMSGEITK (82 aa)) enclose the PTS EIIB type-1 domain. C460 functions as the Phosphocysteine intermediate; for EIIB activity in the catalytic mechanism. The PTS EIIA type-1 domain maps to 560 to 664 (DQVFAGKMMG…SIVTPMIITN (105 aa)). H612 functions as the Tele-phosphohistidine intermediate; for EIIA activity in the catalytic mechanism.

The protein localises to the cell membrane. Functionally, the phosphoenolpyruvate-dependent sugar phosphotransferase system (sugar PTS), a major carbohydrate active -transport system, catalyzes the phosphorylation of incoming sugar substrates concomitantly with their translocation across the cell membrane. This system is involved in alpha- and beta-glucoside transport. This Staphylococcus aureus (strain JH1) protein is PTS system glucoside-specific EIICBA component (glcB).